A 142-amino-acid chain; its full sequence is NTF2-related export protein 2 (142 aa).

The region spanning 17–136 (AAEEFVNIYY…WKIASDCFRF (120 aa)) is the NTF2 domain.

Associates with NXF1, NXF2, NXF3 and NXF5.

The protein localises to the nucleus. Its subcellular location is the cytoplasm. Functionally, regulator of protein export for NES-containing proteins. Also plays a role in mRNA nuclear export. In Mus musculus (Mouse), this protein is NTF2-related export protein 2 (Nxt2).